Consider the following 403-residue polypeptide: CCA-adding enzyme (403 aa).

ATP-binding residues include Gly-32 and Arg-35. Positions 32 and 35 each coordinate CTP. Residues Asp-45 and Asp-47 each contribute to the Mg(2+) site. ATP contacts are provided by Arg-116, Asp-159, Arg-162, Arg-165, and Arg-168. CTP is bound by residues Arg-116, Asp-159, Arg-162, Arg-165, and Arg-168.

It belongs to the tRNA nucleotidyltransferase/poly(A) polymerase family. Bacterial CCA-adding enzyme type 3 subfamily. In terms of assembly, homodimer. The cofactor is Mg(2+).

The catalysed reaction is a tRNA precursor + 2 CTP + ATP = a tRNA with a 3' CCA end + 3 diphosphate. It carries out the reaction a tRNA with a 3' CCA end + 2 CTP + ATP = a tRNA with a 3' CCACCA end + 3 diphosphate. Catalyzes the addition and repair of the essential 3'-terminal CCA sequence in tRNAs without using a nucleic acid template. Adds these three nucleotides in the order of C, C, and A to the tRNA nucleotide-73, using CTP and ATP as substrates and producing inorganic pyrophosphate. tRNA 3'-terminal CCA addition is required both for tRNA processing and repair. Also involved in tRNA surveillance by mediating tandem CCA addition to generate a CCACCA at the 3' terminus of unstable tRNAs. While stable tRNAs receive only 3'-terminal CCA, unstable tRNAs are marked with CCACCA and rapidly degraded. This Limosilactobacillus reuteri (strain DSM 20016) (Lactobacillus reuteri) protein is CCA-adding enzyme.